Reading from the N-terminus, the 63-residue chain is Cecropin-A1 (63 aa).

The first 19 residues, 1–19, serve as a signal peptide directing secretion; it reads MNFYNIFVFVALILAITIG. Arg62 is modified (arginine amide).

Belongs to the cecropin family.

It is found in the secreted. Its function is as follows. Cecropins have lytic and antibacterial activity against several Gram-positive and Gram-negative bacteria. This Drosophila simulans (Fruit fly) protein is Cecropin-A1 (CecA1).